We begin with the raw amino-acid sequence, 300 residues long: Tyrosine recombinase XerC (300 aa).

In terms of domain architecture, Core-binding (CB) spans 1 to 86; the sequence is MESVLDAFDQ…AVKTFTAWAV (86 aa). The Tyr recombinase domain maps to 107–294; the sequence is TLPAVLRQDQ…TVARLRAVHD (188 aa). Active-site residues include arginine 151, lysine 175, histidine 246, arginine 249, and histidine 272. Residue tyrosine 281 is the O-(3'-phospho-DNA)-tyrosine intermediate of the active site.

The protein belongs to the 'phage' integrase family. XerC subfamily. As to quaternary structure, forms a cyclic heterotetrameric complex composed of two molecules of XerC and two molecules of XerD.

The protein localises to the cytoplasm. Functionally, site-specific tyrosine recombinase, which acts by catalyzing the cutting and rejoining of the recombining DNA molecules. The XerC-XerD complex is essential to convert dimers of the bacterial chromosome into monomers to permit their segregation at cell division. It also contributes to the segregational stability of plasmids. The polypeptide is Tyrosine recombinase XerC (Mycobacterium sp. (strain KMS)).